The following is a 386-amino-acid chain: Succinate--CoA ligase [ADP-forming] subunit beta (386 aa).

Residues Lys46, 53-55, Glu99, Ala102, and Glu107 contribute to the ATP site; that span reads GRG. Mg(2+) is bound by residues Asn199 and Asp213. Substrate-binding positions include Asn264 and 321 to 323; that span reads GIV.

Belongs to the succinate/malate CoA ligase beta subunit family. As to quaternary structure, heterotetramer of two alpha and two beta subunits. Requires Mg(2+) as cofactor.

The catalysed reaction is succinate + ATP + CoA = succinyl-CoA + ADP + phosphate. It catalyses the reaction GTP + succinate + CoA = succinyl-CoA + GDP + phosphate. It functions in the pathway carbohydrate metabolism; tricarboxylic acid cycle; succinate from succinyl-CoA (ligase route): step 1/1. In terms of biological role, succinyl-CoA synthetase functions in the citric acid cycle (TCA), coupling the hydrolysis of succinyl-CoA to the synthesis of either ATP or GTP and thus represents the only step of substrate-level phosphorylation in the TCA. The beta subunit provides nucleotide specificity of the enzyme and binds the substrate succinate, while the binding sites for coenzyme A and phosphate are found in the alpha subunit. The chain is Succinate--CoA ligase [ADP-forming] subunit beta from Actinobacillus succinogenes (strain ATCC 55618 / DSM 22257 / CCUG 43843 / 130Z).